A 212-amino-acid chain; its full sequence is Putative protein phosphatase 2C 53 (212 aa).

The region spanning 1-208 (MEDRFSAITN…DDISVMLIPL (208 aa)) is the PPM-type phosphatase domain. Aspartate 199 provides a ligand contact to Mn(2+).

Belongs to the PP2C family. The cofactor is Mg(2+). Requires Mn(2+) as cofactor.

It catalyses the reaction O-phospho-L-seryl-[protein] + H2O = L-seryl-[protein] + phosphate. The enzyme catalyses O-phospho-L-threonyl-[protein] + H2O = L-threonyl-[protein] + phosphate. In Arabidopsis thaliana (Mouse-ear cress), this protein is Putative protein phosphatase 2C 53.